The sequence spans 105 residues: NADH-quinone oxidoreductase subunit K (105 aa).

3 helical membrane-spanning segments follow: residues 4-24 (LTHYLILSGVLFAIGLMGVIV), 28-48 (IIVIFMCLEMMLSAANLSLVA), and 66-86 (LSIFILTIAAAEVAIGLALIV).

The protein belongs to the complex I subunit 4L family. As to quaternary structure, NDH-1 is composed of 14 different subunits. Subunits NuoA, H, J, K, L, M, N constitute the membrane sector of the complex.

It localises to the cell inner membrane. It catalyses the reaction a quinone + NADH + 5 H(+)(in) = a quinol + NAD(+) + 4 H(+)(out). Its function is as follows. NDH-1 shuttles electrons from NADH, via FMN and iron-sulfur (Fe-S) centers, to quinones in the respiratory chain. The immediate electron acceptor for the enzyme in this species is believed to be ubiquinone. Couples the redox reaction to proton translocation (for every two electrons transferred, four hydrogen ions are translocated across the cytoplasmic membrane), and thus conserves the redox energy in a proton gradient. The protein is NADH-quinone oxidoreductase subunit K of Akkermansia muciniphila (strain ATCC BAA-835 / DSM 22959 / JCM 33894 / BCRC 81048 / CCUG 64013 / CIP 107961 / Muc).